Reading from the N-terminus, the 238-residue chain is Probable RNA/DNA demethylase ALKBH6 (238 aa).

Residues 96 to 227 enclose the Fe2OG dioxygenase domain; it reads PANHVLVNQY…RVSLTIRRVP (132 aa). Positions 103 and 105 each coordinate 2-oxoglutarate. Positions 114 and 116 each coordinate Fe cation. Residues 138 to 161 are disordered; it reads YEPRRPEDDDPTEQPRPPPRPTTS. Residue histidine 182 coordinates Fe cation. Positions 218 and 220 each coordinate 2-oxoglutarate.

It belongs to the alkB family. As to quaternary structure, interacts with VCPKMT. Fe(2+) is required as a cofactor. As to expression, widely expressed, with highest expression in testis and pancreas.

Its subcellular location is the cytoplasm. The protein resides in the nucleus. Its function is as follows. Probable Fe(2+)/2-oxoglutarate-dependent dioxygenase involved in oxidative demethylation of nucleic acids. Binds nucleic acids with a preference for ssDNA or ssRNA to other types of DNAs. May play a role in nucleic acid damage repair. The sequence is that of Probable RNA/DNA demethylase ALKBH6 from Homo sapiens (Human).